The chain runs to 270 residues: Co-chaperone protein DjlA (270 aa).

Residues 1–6 (MQYWGK) are Periplasmic-facing. Residues 7-31 (IIGVAVALMMGGGFWGVVLGLLVGH) form a helical membrane-spanning segment. Topologically, residues 32–270 (MFDKARSRKM…ELIKEQKGFK (239 aa)) are cytoplasmic. The region spanning 204 to 270 (DACNVLGVKT…ELIKEQKGFK (67 aa)) is the J domain.

Homodimer.

It is found in the cell inner membrane. In terms of biological role, regulatory DnaK co-chaperone. Direct interaction between DnaK and DjlA is needed for the induction of the wcaABCDE operon, involved in the synthesis of a colanic acid polysaccharide capsule, possibly through activation of the RcsB/RcsC phosphotransfer signaling pathway. The colanic acid capsule may help the bacterium survive conditions outside the host. The protein is Co-chaperone protein DjlA of Salmonella paratyphi A (strain ATCC 9150 / SARB42).